A 1397-amino-acid polypeptide reads, in one-letter code: DNA-directed RNA polymerase subunit beta' (1397 aa).

Zn(2+) contacts are provided by cysteine 75, cysteine 77, cysteine 90, and cysteine 93. The Mg(2+) site is built by aspartate 465, aspartate 467, and aspartate 469. 4 residues coordinate Zn(2+): cysteine 819, cysteine 893, cysteine 900, and cysteine 903.

The protein belongs to the RNA polymerase beta' chain family. The RNAP catalytic core consists of 2 alpha, 1 beta, 1 beta' and 1 omega subunit. When a sigma factor is associated with the core the holoenzyme is formed, which can initiate transcription. Mg(2+) serves as cofactor. The cofactor is Zn(2+).

It catalyses the reaction RNA(n) + a ribonucleoside 5'-triphosphate = RNA(n+1) + diphosphate. In terms of biological role, DNA-dependent RNA polymerase catalyzes the transcription of DNA into RNA using the four ribonucleoside triphosphates as substrates. This is DNA-directed RNA polymerase subunit beta' from Acinetobacter baumannii (strain ACICU).